Consider the following 407-residue polypeptide: Protein ZNF365 (407 aa).

At serine 16 the chain carries Phosphoserine. The segment at 26–51 adopts a C2H2-type; degenerate zinc-finger fold; that stretch reads FRCPRCGDHTRFRSLSSLRAHLEFSH. Serine 138 is modified (phosphoserine). The stretch at 169–296 forms a coiled coil; sequence VEAVDRTIEK…KQLEYYQSQQ (128 aa). Threonine 175 bears the Phosphothreonine mark. The interval 347–392 is disordered; the sequence is LKKAKDDRASMQPAKAIHEQAESSRDLCRPPKKGELLGFGRKGNIR. Positions 362-381 are enriched in basic and acidic residues; sequence AIHEQAESSRDLCRPPKKGE. Serine 369 is subject to Phosphoserine.

In terms of assembly, homodimers. Interacts with NDE1 and NDEL1. Interacts with DISC1. Interacts with PARP1. Interacts with MCRS1.

The protein resides in the cytoplasm. It is found in the cytoskeleton. Its subcellular location is the microtubule organizing center. The protein localises to the centrosome. Functionally, involved in the regulation of neurogenesis. Negatively regulates neurite outgrowth. Involved in the morphogenesis of basket cells in the somatosensory cortex during embryogenesis. Involved in the positive regulation of oligodendrocyte differentiation during postnatal growth. Involved in dendritic arborization, morphogenesis of spine density dendrite, and establishment of postsynaptic dendrite density in cortical pyramidal neurons. Involved in homologous recombination (HR) repair pathway. Required for proper resolution of DNA double-strand breaks (DSBs) by HR. Is required for recovery of stalled replication forks, and directly contributes to genomic stability. Interacts with PARP1 and mediates MRE11-dependent DNA end resection during replication fork recovery. Contributes to genomic stability by preventing telomere dysfunction. This is Protein ZNF365 (ZNF365) from Pongo abelii (Sumatran orangutan).